The chain runs to 447 residues: Probable aspartic protease At2g35615 (447 aa).

A signal peptide spans 1–20 (MATQILLCFFLFFSVTLSSS). A glycan (N-linked (GlcNAc...) asparagine) is linked at Asn25. One can recognise a Peptidase A1 domain in the interval 85 to 439 (FFMSITIGTP…DLETRTVSFQ (355 aa)). The active site involves Asp103. Asn251 carries an N-linked (GlcNAc...) asparagine glycan. Residue Asp326 is part of the active site.

The protein belongs to the peptidase A1 family.

It localises to the secreted. This Arabidopsis thaliana (Mouse-ear cress) protein is Probable aspartic protease At2g35615.